Consider the following 1198-residue polypeptide: DNA polymerase (1198 aa).

3 disordered regions span residues Met-1 to Thr-87, Leu-179 to Pro-199, and Gln-904 to Gly-930. Low complexity-rich tracts occupy residues Gln-30–Ala-40 and Ala-57–Pro-68.

The protein belongs to the DNA polymerase type-B family. As to quaternary structure, heterodimer with the terminal protein; this heterodimer binds to bp 9 to 18 of the genome. Forms a complex with viral pTP, DBP and hosts NFIA and POU2F1/OCT1 for initiation of replication.

The protein resides in the host nucleus. It catalyses the reaction DNA(n) + a 2'-deoxyribonucleoside 5'-triphosphate = DNA(n+1) + diphosphate. Eukaryotic-type DNA polymerase involved in viral genomic replication. DNA synthesis is protein primed, and acts in a strand displacement replication. Assembles in complex with viral pTP, DBP, host NFIA and host POU2F1/OCT1 on viral origin of replication. The polymerase covalently transfers dCMP onto pTP, thereby initiating complementary strand synthesis. The polypeptide is DNA polymerase (Homo sapiens (Human)).